The chain runs to 190 residues: Dense granule protein 1 (190 aa).

The N-terminal stretch at 1–24 (MVRVSAIVGAAASVFVCLSAGAYA) is a signal peptide. Asparagine 30 carries N-linked (GlcNAc...) asparagine glycosylation.

Its subcellular location is the secreted. The sequence is that of Dense granule protein 1 (GRA1) from Toxoplasma gondii.